The sequence spans 785 residues: Protein SEY1 (785 aa).

A disordered region spans residues 1–31 (MASAAPINLRAQDTPYVPPTSLPTSSSQTGS). The Cytoplasmic segment spans residues 1–689 (MASAAPINLR…KRSTVASIAQ (689 aa)). Over residues 22–31 (LPTSSSQTGS) the composition is skewed to low complexity. The region spanning 61–281 (GFSYNIVAVF…SSDYLFKPAY (221 aa)) is the GB1/RHD3-type G domain. 71–78 (GSQSTGKS) serves as a coordination point for GTP. A coiled-coil region spans residues 458–482 (SWEEELELLRDEIRAVADQCRKDET). The chain crosses the membrane as a helical span at residues 690 to 710 (IPYWIYGVLVVLGWNEAMLVL). The Lumenal portion of the chain corresponds to 711–713 (FNP). The chain crosses the membrane as a helical span at residues 714–734 (LYFAFLLLAMATSYIIAQLGL). At 735–785 (VGPLFQVTRTVGSEIQRQATARLREHFSQPVLAEPVQVGPSRDREEVGQIQ) the chain is on the cytoplasmic side.

It belongs to the TRAFAC class dynamin-like GTPase superfamily. GB1/RHD3 GTPase family. RHD3 subfamily.

It localises to the endoplasmic reticulum membrane. Its function is as follows. Cooperates with the reticulon proteins and tubule-shaping DP1 family proteins to generate and maintain the structure of the tubular endoplasmic reticulum network. Has GTPase activity, which is required for its function in ER organization. The chain is Protein SEY1 from Laccaria bicolor (strain S238N-H82 / ATCC MYA-4686) (Bicoloured deceiver).